The chain runs to 322 residues: tRNA U34 carboxymethyltransferase (322 aa).

Residues Lys90, Trp104, Lys109, Gly129, Asp151 to Thr153, Ile180 to Glu181, Met195, Tyr199, and Arg314 contribute to the carboxy-S-adenosyl-L-methionine site.

Belongs to the class I-like SAM-binding methyltransferase superfamily. CmoB family. Homotetramer.

The catalysed reaction is carboxy-S-adenosyl-L-methionine + 5-hydroxyuridine(34) in tRNA = 5-carboxymethoxyuridine(34) in tRNA + S-adenosyl-L-homocysteine + H(+). In terms of biological role, catalyzes carboxymethyl transfer from carboxy-S-adenosyl-L-methionine (Cx-SAM) to 5-hydroxyuridine (ho5U) to form 5-carboxymethoxyuridine (cmo5U) at position 34 in tRNAs. This Citrobacter koseri (strain ATCC BAA-895 / CDC 4225-83 / SGSC4696) protein is tRNA U34 carboxymethyltransferase.